We begin with the raw amino-acid sequence, 322 residues long: Putative ankyrin repeat protein L897 (322 aa).

ANK repeat units follow at residues 88-117 (DNEY…SYDM), 181-210 (NIID…FWAN), and 248-277 (NKNE…QTDH).

The protein is Putative ankyrin repeat protein L897 of Acanthamoeba polyphaga (Amoeba).